Consider the following 678-residue polypeptide: DNA gyrase subunit B (678 aa).

Positions 456-570 (SELYVVEGDS…HGYVFLAQPP (115 aa)) constitute a Toprim domain. Mg(2+) contacts are provided by glutamate 462, aspartate 535, and aspartate 537.

This sequence belongs to the type II topoisomerase GyrB family. As to quaternary structure, heterotetramer, composed of two GyrA and two GyrB chains. In the heterotetramer, GyrA contains the active site tyrosine that forms a transient covalent intermediate with the DNA, while GyrB binds cofactors catalyzes ATP hydrolysis. The cofactor is Mg(2+). Mn(2+) is required as a cofactor. It depends on Ca(2+) as a cofactor.

It localises to the cytoplasm. The catalysed reaction is ATP-dependent breakage, passage and rejoining of double-stranded DNA.. DNA supercoiling is inhibited by fluoroquinolones; IC(50) 1 ug/ml for sitafloxacin. Its function is as follows. A type II topoisomerase that negatively supercoils closed circular double-stranded (ds) DNA in an ATP-dependent manner to modulate DNA topology and maintain chromosomes in an underwound state. Negative supercoiling favors strand separation, and DNA replication, transcription, recombination and repair, all of which involve strand separation. Also able to catalyze the interconversion of other topological isomers of dsDNA rings, including catenanes and knotted rings. Type II topoisomerases break and join 2 DNA strands simultaneously in an ATP-dependent manner. The chain is DNA gyrase subunit B from Mycobacterium leprae (strain TN).